The following is a 142-amino-acid chain: Putative pre-16S rRNA nuclease (142 aa).

The protein belongs to the YqgF nuclease family.

Its subcellular location is the cytoplasm. Functionally, could be a nuclease involved in processing of the 5'-end of pre-16S rRNA. The chain is Putative pre-16S rRNA nuclease from Lactobacillus helveticus (strain DPC 4571).